Consider the following 277-residue polypeptide: Large ribosomal subunit protein uL2 (277 aa).

The segment at 222–258 (GSVMNPCDHPHGGGEGRSPIGRPSPVTPWGKPALGYK) is disordered.

It belongs to the universal ribosomal protein uL2 family. Part of the 50S ribosomal subunit. Forms a bridge to the 30S subunit in the 70S ribosome.

Its function is as follows. One of the primary rRNA binding proteins. Required for association of the 30S and 50S subunits to form the 70S ribosome, for tRNA binding and peptide bond formation. It has been suggested to have peptidyltransferase activity; this is somewhat controversial. Makes several contacts with the 16S rRNA in the 70S ribosome. This Clostridium perfringens (strain 13 / Type A) protein is Large ribosomal subunit protein uL2.